The following is a 522-amino-acid chain: ATP synthase subunit alpha, mitochondrial (522 aa).

Residue 172 to 179 coordinates ATP; sequence GDRQTGKT.

The protein belongs to the ATPase alpha/beta chains family. F-type ATPases have 2 components, CF(1) - the catalytic core - and CF(0) - the membrane proton channel. CF(1) has five subunits: alpha(3), beta(3), gamma(1), delta(1), epsilon(1). CF(0) has three main subunits: a, b and c.

The protein localises to the mitochondrion. It is found in the mitochondrion inner membrane. In terms of biological role, mitochondrial membrane ATP synthase (F(1)F(0) ATP synthase or Complex V) produces ATP from ADP in the presence of a proton gradient across the membrane which is generated by electron transport complexes of the respiratory chain. F-type ATPases consist of two structural domains, F(1) - containing the extramembraneous catalytic core, and F(0) - containing the membrane proton channel, linked together by a central stalk and a peripheral stalk. During catalysis, ATP synthesis in the catalytic domain of F(1) is coupled via a rotary mechanism of the central stalk subunits to proton translocation. Subunits alpha and beta form the catalytic core in F(1). Rotation of the central stalk against the surrounding alpha(3)beta(3) subunits leads to hydrolysis of ATP in three separate catalytic sites on the beta subunits. Subunit alpha does not bear the catalytic high-affinity ATP-binding sites. The protein is ATP synthase subunit alpha, mitochondrial (ATP1) of Acanthamoeba castellanii (Amoeba).